Consider the following 195-residue polypeptide: 3-isopropylmalate dehydratase small subunit (195 aa).

Belongs to the LeuD family. LeuD type 1 subfamily. As to quaternary structure, heterodimer of LeuC and LeuD.

It carries out the reaction (2R,3S)-3-isopropylmalate = (2S)-2-isopropylmalate. The protein operates within amino-acid biosynthesis; L-leucine biosynthesis; L-leucine from 3-methyl-2-oxobutanoate: step 2/4. Functionally, catalyzes the isomerization between 2-isopropylmalate and 3-isopropylmalate, via the formation of 2-isopropylmaleate. This chain is 3-isopropylmalate dehydratase small subunit, found in Oenococcus oeni (strain ATCC BAA-331 / PSU-1).